The following is an 82-amino-acid chain: Neuromacin (82 aa).

The N-terminal stretch at 1–23 (MALLNKLLCFALVFMIFGEFVTP) is a signal peptide. 4 disulfides stabilise this stretch: Cys-25-Cys-32, Cys-47-Cys-51, Cys-61-Cys-69, and Cys-79-Cys-81.

The protein belongs to the macin family.

The protein localises to the secreted. This is Neuromacin from Hirudo medicinalis (Medicinal leech).